We begin with the raw amino-acid sequence, 347 residues long: Molybdenum cofactor biosynthesis bifunctional protein (347 aa).

Positions 1-158 (MFTHLDENQQ…EKTGGKADVS (158 aa)) are molybdenum cofactor biosynthesis protein C. Substrate contacts are provided by residues 75-77 (FCH) and 116-117 (ME). The active-site For MoaC activity is Asp-131. A molybdenum cofactor guanylyltransferase region spans residues 159 to 347 (QTPLYGLVLT…NSPEDYGQIN (189 aa)). Residues 167–169 (LTG), Lys-179, Asp-226, and Asp-255 contribute to the GTP site. Mg(2+) is bound at residue Asp-255.

This sequence in the N-terminal section; belongs to the MoaC family. It in the C-terminal section; belongs to the MobA family. Mg(2+) is required as a cofactor.

The protein resides in the cytoplasm. It carries out the reaction Mo-molybdopterin + GTP + H(+) = Mo-molybdopterin guanine dinucleotide + diphosphate. The enzyme catalyses (8S)-3',8-cyclo-7,8-dihydroguanosine 5'-triphosphate = cyclic pyranopterin phosphate + diphosphate. The protein operates within cofactor biosynthesis; molybdopterin biosynthesis. Functionally, catalyzes the conversion of (8S)-3',8-cyclo-7,8-dihydroguanosine 5'-triphosphate to cyclic pyranopterin monophosphate (cPMP). Transfers a GMP moiety from GTP to Mo-molybdopterin (Mo-MPT) cofactor (Moco or molybdenum cofactor) to form Mo-molybdopterin guanine dinucleotide (Mo-MGD) cofactor. This Synechocystis sp. (strain ATCC 27184 / PCC 6803 / Kazusa) protein is Molybdenum cofactor biosynthesis bifunctional protein (moaC/mobA).